A 442-amino-acid polypeptide reads, in one-letter code: tRNA modification GTPase MnmE (442 aa).

(6S)-5-formyl-5,6,7,8-tetrahydrofolate-binding residues include arginine 24, glutamate 82, and lysine 120. In terms of domain architecture, TrmE-type G spans 217–367 (GLHIVITGEP…LISLIKEKAE (151 aa)). GTP is bound by residues 227–232 (NVGKST), 246–252 (SEYAGTT), and 271–274 (DTAG). Mg(2+) is bound by residues serine 231 and threonine 252. Residue lysine 442 coordinates (6S)-5-formyl-5,6,7,8-tetrahydrofolate.

It belongs to the TRAFAC class TrmE-Era-EngA-EngB-Septin-like GTPase superfamily. TrmE GTPase family. In terms of assembly, homodimer. Heterotetramer of two MnmE and two MnmG subunits. K(+) is required as a cofactor.

Its subcellular location is the cytoplasm. Exhibits a very high intrinsic GTPase hydrolysis rate. Involved in the addition of a carboxymethylaminomethyl (cmnm) group at the wobble position (U34) of certain tRNAs, forming tRNA-cmnm(5)s(2)U34. The sequence is that of tRNA modification GTPase MnmE from Wolbachia sp. subsp. Drosophila simulans (strain wRi).